A 176-amino-acid chain; its full sequence is 2-oxo-4-hydroxy-4-carboxy-5-ureidoimidazoline decarboxylase (176 aa).

H70 acts as the Proton donor; for OHCU decarboxylase activity in catalysis. Substrate-binding positions include P71, S83–Q87, and F118–V122. The interval D72–P96 is disordered.

Belongs to the OHCU decarboxylase family.

The enzyme catalyses 5-hydroxy-2-oxo-4-ureido-2,5-dihydro-1H-imidazole-5-carboxylate + H(+) = (S)-allantoin + CO2. It functions in the pathway purine metabolism; urate degradation; (S)-allantoin from urate: step 3/3. In terms of biological role, catalyzes the stereoselective decarboxylation of 2-oxo-4-hydroxy-4-carboxy-5-ureidoimidazoline (OHCU) to (S)-allantoin. The sequence is that of 2-oxo-4-hydroxy-4-carboxy-5-ureidoimidazoline decarboxylase from Halalkalicoccus jeotgali (strain DSM 18796 / CECT 7217 / JCM 14584 / KCTC 4019 / B3).